The primary structure comprises 364 residues: Probable dual-specificity RNA methyltransferase RlmN (364 aa).

The active-site Proton acceptor is the Glu-107. The Radical SAM core domain occupies 113–346 (HDYGNSVCVT…ATIRREQGSD (234 aa)). The cysteines at positions 120 and 351 are disulfide-linked. The [4Fe-4S] cluster site is built by Cys-127, Cys-131, and Cys-134. S-adenosyl-L-methionine contacts are provided by residues 177 to 178 (GE), Ser-209, 232 to 234 (SLH), and Asn-308. The active-site S-methylcysteine intermediate is the Cys-351.

It belongs to the radical SAM superfamily. RlmN family. [4Fe-4S] cluster is required as a cofactor.

Its subcellular location is the cytoplasm. The catalysed reaction is adenosine(2503) in 23S rRNA + 2 reduced [2Fe-2S]-[ferredoxin] + 2 S-adenosyl-L-methionine = 2-methyladenosine(2503) in 23S rRNA + 5'-deoxyadenosine + L-methionine + 2 oxidized [2Fe-2S]-[ferredoxin] + S-adenosyl-L-homocysteine. It carries out the reaction adenosine(37) in tRNA + 2 reduced [2Fe-2S]-[ferredoxin] + 2 S-adenosyl-L-methionine = 2-methyladenosine(37) in tRNA + 5'-deoxyadenosine + L-methionine + 2 oxidized [2Fe-2S]-[ferredoxin] + S-adenosyl-L-homocysteine. In terms of biological role, specifically methylates position 2 of adenine 2503 in 23S rRNA and position 2 of adenine 37 in tRNAs. Confers resistance to some classes of antibiotics. This chain is Probable dual-specificity RNA methyltransferase RlmN, found in Staphylococcus aureus (strain bovine RF122 / ET3-1).